We begin with the raw amino-acid sequence, 99 residues long: Small ribosomal subunit protein uS14m (99 aa).

The protein belongs to the universal ribosomal protein uS14 family.

The protein localises to the mitochondrion. The polypeptide is Small ribosomal subunit protein uS14m (RPS14) (Acanthamoeba castellanii (Amoeba)).